The following is a 1147-amino-acid chain: Lon protease homolog 2, peroxisomal (1147 aa).

The Lon N-terminal domain maps to 20 to 348 (LPTYKLDSNL…EVNRMLESMI (329 aa)). Disordered regions lie at residues 395–444 (KPDK…DDDD) and 561–626 (KIES…SLTT). Residues 427 to 444 (DGNESNDEYDDDEDDDDD) show a composition bias toward acidic residues. Composition is skewed to basic and acidic residues over residues 561-574 (KIESENSKKSKKNE) and 582-597 (KNDKQRSEKTFTRSDD). 651–658 (GPPGTGKT) provides a ligand contact to ATP. In terms of domain architecture, Lon proteolytic spans 903–1131 (SAKCGVVNGL…WDVIKAVWGD (229 aa)). Residues Ser-1006 and Lys-1049 contribute to the active site.

This sequence belongs to the peptidase S16 family.

It is found in the peroxisome matrix. The enzyme catalyses Hydrolysis of proteins in presence of ATP.. In terms of biological role, ATP-dependent serine protease that mediates the selective degradation of misfolded and unassembled polypeptides in the peroxisomal matrix. Necessary for type 2 peroxisome targeting signal (PTS2)-containing protein processing and facilitates peroxisome matrix protein import. This chain is Lon protease homolog 2, peroxisomal, found in Debaryomyces hansenii (strain ATCC 36239 / CBS 767 / BCRC 21394 / JCM 1990 / NBRC 0083 / IGC 2968) (Yeast).